A 514-amino-acid chain; its full sequence is 1-pyrroline-5-carboxylate dehydrogenase (514 aa).

Catalysis depends on residues Glu-286 and Cys-320.

It belongs to the aldehyde dehydrogenase family. RocA subfamily.

It catalyses the reaction L-glutamate 5-semialdehyde + NAD(+) + H2O = L-glutamate + NADH + 2 H(+). The protein operates within amino-acid degradation; L-proline degradation into L-glutamate; L-glutamate from L-proline: step 2/2. This is 1-pyrroline-5-carboxylate dehydrogenase from Staphylococcus haemolyticus (strain JCSC1435).